The chain runs to 661 residues: ATP-dependent RNA helicase vasa (661 aa).

Residues 1–10 are compositionally biased toward acidic residues; that stretch reads MSDDWDDEPI. The interval 1 to 186 is disordered; the sequence is MSDDWDDEPI…RRRRNEDDIN (186 aa). Position 22 is a phosphoserine (Ser-22). Position 27 is a phosphothreonine (Thr-27). Composition is skewed to gly residues over residues 38–52 and 60–83; these read DGVG…GYQG and RIGG…GGFH. Residues 85–95 show a composition bias toward basic and acidic residues; sequence GRREGERDFRG. 5 repeat units span residues 93 to 99, 100 to 106, 107 to 113, 114 to 120, and 121 to 127. The 5 X 7 AA tandem repeats of [FS]-R-G-G-[EQ]-G-G stretch occupies residues 93 to 127; the sequence is FRGGEGGFRGGQGGSRGGQGGSRGGQGGFRGGEGG. The segment covering 96–129 has biased composition (gly residues); the sequence is GEGGFRGGQGGSRGGQGGSRGGQGGFRGGEGGFR. The span at 131-172 shows a compositional bias: basic and acidic residues; sequence RLYENEDGDERRGRLDREERGGERRGRLDREERGGERGERGD. The B30.2/SPRY domain-binding motif motif lies at 184 to 188; the sequence is DINNN. The interval 184–203 is required for posterior localization in oocyte; the sequence is DINNNNNIVEDVERKREFYI. The short motif at 245-273 is the Q motif element; that stretch reads QHFTSADLRDIIIDNVNKSGYKIPTPIQK. Residues 276–453 enclose the Helicase ATP-binding domain; sequence IPVISSGRDL…GEFLKNYVFV (178 aa). 289–296 is a binding site for ATP; that stretch reads AQTGSGKT. A DEAD box motif is present at residues 399-402; that stretch reads DEAD. The Helicase C-terminal domain maps to 477–624; the sequence is KRSKLIEILS…TVPDFLRTCG (148 aa).

This sequence belongs to the DEAD box helicase family. DDX4/VASA subfamily. Interacts with eIF5B and faf. Interacts with gus (via B30.2/SPRY domain) and Fsn (via B30.2/SPRY domain). Interacts with aub, me31B, eIF-4a and TER94. Interacts with piwi; this interaction is RNA independent. Interacts with Dcr-1 and Fmr1; these interactions occur in the polar granules. The cofactor is Mg(2+). Ubiquitinated during oogenesis. Deubiquitinated by faf, which protects this protein from proteasome-mediated degradation. Abundantly expressed in the female germline. Gus and faf are required for vas expression in the posterior pole of the oocyte.

The protein resides in the cytoplasm. It is found in the perinuclear region. It localises to the cytoplasmic ribonucleoprotein granule. It catalyses the reaction ATP + H2O = ADP + phosphate + H(+). Functionally, involved in translational control mechanisms operating in early stages of oogenesis. Required maternally in many stages of oogenesis, including cystocyte differentiation, oocyte differentiation, and specification of anterior-posterior polarity in the developing cysts. Essential for the formation and/or structural integrity of perinuclear nuage particles during germ cell formation. Required for gus, Fsn and aub accumulation at the posterior pole of the embryo. Required for the localization of vas to the perinuclear region of nurse cells. May have a role in production of piwi-interacting RNA (piRNA). This Drosophila melanogaster (Fruit fly) protein is ATP-dependent RNA helicase vasa.